The following is a 260-amino-acid chain: MKVRTLTAIIALIVFLPVLLKGGLILMLFSYLLAFIALKELLNMNMIKFLSIPGIISALGILIIMLPQDAGSWVNDLQLKSLIAMSFILLSYTVLSKNRFSFMDAAFCLMSIAYVGIGFMYLYETRSEGLHYILFAFLVVWLTDTGAYIFGRLMGKHKLWPVISPNKTVEGFVGGLICSLIVPLVMMIFVDFNIALWLLLIITIILSMFGQLGDLVESGFKRHFGVKDSGRILPGHGGILDRFDSFMFVLPLLNILLIQI.

7 helical membrane-spanning segments follow: residues 9-29 (IIAL…LMLF), 46-66 (MIKF…IIML), 70-90 (AGSW…FILL), 102-122 (FMDA…FMYL), 130-150 (LHYI…AYIF), 172-192 (FVGG…FVDF), and 196-216 (LWLL…GDLV).

Belongs to the CDS family.

Its subcellular location is the cell membrane. It catalyses the reaction a 1,2-diacyl-sn-glycero-3-phosphate + CTP + H(+) = a CDP-1,2-diacyl-sn-glycerol + diphosphate. The protein operates within phospholipid metabolism; CDP-diacylglycerol biosynthesis; CDP-diacylglycerol from sn-glycerol 3-phosphate: step 3/3. The chain is Phosphatidate cytidylyltransferase (cdsA) from Staphylococcus saprophyticus subsp. saprophyticus (strain ATCC 15305 / DSM 20229 / NCIMB 8711 / NCTC 7292 / S-41).